Reading from the N-terminus, the 332-residue chain is GLIPR1-like protein 2 (332 aa).

The SCP domain occupies 57-191 (LHNELRGTVF…THAALFICNY (135 aa)). A glycan (N-linked (GlcNAc...) asparagine) is linked at Asn145. The chain crosses the membrane as a helical span at residues 253–273 (IFILFLRVASLLLCVIVVLIV). Residues 293–332 (EGKTEVEIVMEEGEGEGEGGEGEGEGEEKEEEEMLEEDEQ) form a disordered region. Acidic residues predominate over residues 300-332 (IVMEEGEGEGEGGEGEGEGEEKEEEEMLEEDEQ).

It belongs to the CRISP family.

The protein localises to the membrane. The sequence is that of GLIPR1-like protein 2 (Glipr1l2) from Mus musculus (Mouse).